The primary structure comprises 45 residues: Cytochrome b559 subunit beta (45 aa).

A helical transmembrane segment spans residues 20-36 (WLAVHTLAVPTVFFLGA). His-24 is a binding site for heme.

This sequence belongs to the PsbE/PsbF family. In terms of assembly, heterodimer of an alpha subunit and a beta subunit. PSII is composed of 1 copy each of membrane proteins PsbA, PsbB, PsbC, PsbD, PsbE, PsbF, PsbH, PsbI, PsbJ, PsbK, PsbL, PsbM, PsbT, PsbX, PsbY, PsbZ, Psb30/Ycf12, peripheral proteins PsbO, CyanoQ (PsbQ), PsbU, PsbV and a large number of cofactors. It forms dimeric complexes. Heme b serves as cofactor.

The protein resides in the cellular thylakoid membrane. Functionally, this b-type cytochrome is tightly associated with the reaction center of photosystem II (PSII). PSII is a light-driven water:plastoquinone oxidoreductase that uses light energy to abstract electrons from H(2)O, generating O(2) and a proton gradient subsequently used for ATP formation. It consists of a core antenna complex that captures photons, and an electron transfer chain that converts photonic excitation into a charge separation. This Trichormus variabilis (strain ATCC 29413 / PCC 7937) (Anabaena variabilis) protein is Cytochrome b559 subunit beta.